We begin with the raw amino-acid sequence, 257 residues long: Zinc import ATP-binding protein ZnuC (257 aa).

The 216-residue stretch at 6–221 (IRLDQVGVTF…PAFVELFGKT (216 aa)) folds into the ABC transporter domain. Position 38 to 45 (38 to 45 (GPNGAGKT)) interacts with ATP.

It belongs to the ABC transporter superfamily. Zinc importer (TC 3.A.1.15.5) family. The complex is composed of two ATP-binding proteins (ZnuC), two transmembrane proteins (ZnuB) and a solute-binding protein (ZnuA).

The protein localises to the cell inner membrane. The enzyme catalyses Zn(2+)(out) + ATP(in) + H2O(in) = Zn(2+)(in) + ADP(in) + phosphate(in) + H(+)(in). Functionally, part of the ABC transporter complex ZnuABC involved in zinc import. Responsible for energy coupling to the transport system. This chain is Zinc import ATP-binding protein ZnuC, found in Pseudomonas putida (strain ATCC 47054 / DSM 6125 / CFBP 8728 / NCIMB 11950 / KT2440).